A 283-amino-acid chain; its full sequence is Homeobox protein BarH-like 2 (283 aa).

Disordered regions lie at residues 107–141 (AAAAAAETPGGEALASSESETEQPTPRQKKPRRSR) and 198–283 (KGGQ…PPLS). The segment covering 122–132 (SSESETEQPTP) has biased composition (polar residues). The segment at residues 139-198 (RSRTIFTELQLMGLEKKFQKQKYLSTPDRLDLAQSLGLTQLQVKTWYQNRRMKWKKMVLK) is a DNA-binding region (homeobox). The segment covering 268-277 (QPQELSEASS) has biased composition (low complexity).

This sequence belongs to the BAR homeobox family. In terms of tissue distribution, nervous system, particularly in the telencephalon, spinal cord, and dorsal root ganglia.

It is found in the nucleus. Functionally, transcription factor. Binds optimally to the DNA consensus sequence 5'-YYTAATGRTTTTY-3'. May control the expression of neural adhesion molecules such as L1 or Ng-CAM during embryonic development of both the central and peripherical nervous system. May be involved in controlling adhesive processes in keratinizing epithelia. The sequence is that of Homeobox protein BarH-like 2 (Barx2) from Mus musculus (Mouse).